The primary structure comprises 528 residues: Potassium voltage-gated channel subfamily A member 3 (528 aa).

The segment at 1–32 (MTVVPGDHLLEPEAAGGGGGDPPQGGCGSGGG) is disordered. Topologically, residues 1 to 187 (MTVVPGDHLL…EYPESSGPAR (187 aa)) are cytoplasmic. The segment covering 15–32 (AGGGGGDPPQGGCGSGGG) has biased composition (gly residues). A helical membrane pass occupies residues 188 to 206 (GIAIVSVLVILISIVIFCL). At 207–247 (ETLPEFRDEKDYPASPSQDVFEAANNSTSGAPSGASSFSDP) the chain is on the extracellular side. N-linked (GlcNAc...) asparagine glycosylation occurs at Asn-232. Residues 248-269 (FFVVETLCIIWFSFELLVRFFA) traverse the membrane as a helical segment. A lipid anchor (S-palmitoyl cysteine) is attached at Cys-270. The Cytoplasmic segment spans residues 270-280 (CPSKATFSRNI). A helical membrane pass occupies residues 281–301 (MNLIDIVAIIPYFITLGTELA). Residues 302 to 315 (ERQGNGQQAMSLAI) lie on the Extracellular side of the membrane. The chain crosses the membrane as a helical; Voltage-sensor span at residues 316-334 (LRVIRLVRVFRIFKLSRHS). Over 335–350 (KGLQILGQTLKASMRE) the chain is Cytoplasmic. A helical transmembrane segment spans residues 351–370 (LGLLIFFLFIGVILFSSAVY). Over 371–411 (FAEADDPSSGFNSIPDAFWWAVVTMTTVGYGDMHPVTIGGK) the chain is Extracellular. Positions 397-402 (TVGYGD) match the Selectivity filter motif. A helical transmembrane segment spans residues 412–434 (IVGSLCAIAGVLTIALPVPVIVS). The Cytoplasmic segment spans residues 435-528 (NFNYFYHRET…VNIKKIFTDV (94 aa)). Residues 435–528 (NFNYFYHRET…VNIKKIFTDV (94 aa)) are interaction with KCNE4. At Tyr-452 the chain carries Phosphotyrosine. The residue at position 473 (Ser-473) is a Phosphoserine; by PKA. The PDZ-binding signature appears at 526 to 528 (TDV).

The protein belongs to the potassium channel family. A (Shaker) (TC 1.A.1.2) subfamily. Kv1.3/KCNA3 sub-subfamily. Homotetramer. Forms heterooligomers with KCNE4 which inhibits KCNA3 activity by impairing localization to the cell membrane. The stoichiometry of KCNA3 and KCNE4 in the heterooligomers are 4:1, 4:2, 4:3 or 4:4 respectively. Increasing the number of KCNE4 subunits steadily slows the activation KCNA3 and decreases its abundance at the cell membrane. However, a single subunit of KCNE4 is sufficient for the cooperative enhancement of the inactivating function of the channel. Interacts with SEC24D; this interaction is reduced in the presence of KCNE4. Interacts with DLG1, DLG2 and DLG4 via their PDZ domains. N-glycosylation promotes the cell surface expression. Post-translationally, phosphorylation on Tyr-452 inhibits its channel activity.

It localises to the cell membrane. The catalysed reaction is K(+)(in) = K(+)(out). With respect to regulation, activity is up-regulated by JAK2. Mediates the voltage-dependent potassium ion permeability of excitable membranes. Assuming opened or closed conformations in response to the voltage difference across the membrane, the protein forms a potassium-selective channel through which potassium ions may pass in accordance with their electrochemical gradient. The protein is Potassium voltage-gated channel subfamily A member 3 (Kcna3) of Mus musculus (Mouse).